A 646-amino-acid polypeptide reads, in one-letter code: UvrABC system protein B (646 aa).

The Helicase ATP-binding domain maps to 29–411; it reads LEKNPEKSKQ…SNQVVEQIIR (383 aa). An ATP-binding site is contributed by 42–49; the sequence is GVTGSGKT. The short motif at 95–118 is the Beta-hairpin element; the sequence is YYDYYQPESYIPQKDQYIEKDAQI. One can recognise a Helicase C-terminal domain in the interval 428 to 590; sequence QVEDIIKETE…ITPQTIVKPI (163 aa). The UVR domain occupies 609–644; sequence PNVIVELEAEMYEAAEALEFEKAIKIRDTIAKLKKK.

The protein belongs to the UvrB family. As to quaternary structure, forms a heterotetramer with UvrA during the search for lesions. Interacts with UvrC in an incision complex.

It localises to the cytoplasm. In terms of biological role, the UvrABC repair system catalyzes the recognition and processing of DNA lesions. A damage recognition complex composed of 2 UvrA and 2 UvrB subunits scans DNA for abnormalities. Upon binding of the UvrA(2)B(2) complex to a putative damaged site, the DNA wraps around one UvrB monomer. DNA wrap is dependent on ATP binding by UvrB and probably causes local melting of the DNA helix, facilitating insertion of UvrB beta-hairpin between the DNA strands. Then UvrB probes one DNA strand for the presence of a lesion. If a lesion is found the UvrA subunits dissociate and the UvrB-DNA preincision complex is formed. This complex is subsequently bound by UvrC and the second UvrB is released. If no lesion is found, the DNA wraps around the other UvrB subunit that will check the other stand for damage. The sequence is that of UvrABC system protein B from Methanococcus maripaludis (strain DSM 14266 / JCM 13030 / NBRC 101832 / S2 / LL).